The following is a 94-amino-acid chain: Large ribosomal subunit protein uL23 (94 aa).

The protein belongs to the universal ribosomal protein uL23 family. Part of the 50S ribosomal subunit. Contacts protein L29, and trigger factor when it is bound to the ribosome.

In terms of biological role, one of the early assembly proteins it binds 23S rRNA. One of the proteins that surrounds the polypeptide exit tunnel on the outside of the ribosome. Forms the main docking site for trigger factor binding to the ribosome. This chain is Large ribosomal subunit protein uL23, found in Trichlorobacter lovleyi (strain ATCC BAA-1151 / DSM 17278 / SZ) (Geobacter lovleyi).